A 190-amino-acid polypeptide reads, in one-letter code: Imidazoleglycerol-phosphate dehydratase (190 aa).

The protein belongs to the imidazoleglycerol-phosphate dehydratase family.

It localises to the cytoplasm. It catalyses the reaction D-erythro-1-(imidazol-4-yl)glycerol 3-phosphate = 3-(imidazol-4-yl)-2-oxopropyl phosphate + H2O. It participates in amino-acid biosynthesis; L-histidine biosynthesis; L-histidine from 5-phospho-alpha-D-ribose 1-diphosphate: step 6/9. This Sulfurimonas denitrificans (strain ATCC 33889 / DSM 1251) (Thiomicrospira denitrificans (strain ATCC 33889 / DSM 1251)) protein is Imidazoleglycerol-phosphate dehydratase.